A 118-amino-acid chain; its full sequence is Large ribosomal subunit protein uL22 (118 aa).

Belongs to the universal ribosomal protein uL22 family. As to quaternary structure, part of the 50S ribosomal subunit.

Its function is as follows. This protein binds specifically to 23S rRNA; its binding is stimulated by other ribosomal proteins, e.g. L4, L17, and L20. It is important during the early stages of 50S assembly. It makes multiple contacts with different domains of the 23S rRNA in the assembled 50S subunit and ribosome. Functionally, the globular domain of the protein is located near the polypeptide exit tunnel on the outside of the subunit, while an extended beta-hairpin is found that lines the wall of the exit tunnel in the center of the 70S ribosome. This chain is Large ribosomal subunit protein uL22, found in Prosthecochloris aestuarii (strain DSM 271 / SK 413).